A 24-amino-acid polypeptide reads, in one-letter code: Ascaphin-7 (24 aa).

As to expression, expressed by the skin glands.

The protein localises to the secreted. Functionally, antimicrobial peptide that shows higher potency against Gram-negative bacteria than against Gram-positive bacteria. Has a very week hemolytic activity. The protein is Ascaphin-7 of Ascaphus truei (Coastal tailed frog).